A 935-amino-acid chain; its full sequence is Protein translocase subunit SecA (935 aa).

ATP-binding positions include Gln-90, 108–112 (GEGKT), and Asp-504.

This sequence belongs to the SecA family. Monomer and homodimer. Part of the essential Sec protein translocation apparatus which comprises SecA, SecYEG and auxiliary proteins SecDF. Other proteins may also be involved.

It is found in the cell inner membrane. Its subcellular location is the cellular thylakoid membrane. The protein resides in the cytoplasm. It catalyses the reaction ATP + H2O + cellular proteinSide 1 = ADP + phosphate + cellular proteinSide 2.. Its function is as follows. Part of the Sec protein translocase complex. Interacts with the SecYEG preprotein conducting channel. Has a central role in coupling the hydrolysis of ATP to the transfer of proteins into and across the cell membrane, serving as an ATP-driven molecular motor driving the stepwise translocation of polypeptide chains across the membrane. Probably participates in protein translocation into and across both the cytoplasmic and thylakoid membranes in cyanobacterial cells. In Gloeothece citriformis (strain PCC 7424) (Cyanothece sp. (strain PCC 7424)), this protein is Protein translocase subunit SecA.